We begin with the raw amino-acid sequence, 644 residues long: 3D-(3,5/4)-trihydroxycyclohexane-1,2-dione hydrolase 1 (644 aa).

Glu65 contacts thiamine diphosphate. The thiamine pyrophosphate binding stretch occupies residues 442–522 (SLPGDLQRMW…INVLLFDNSG (81 aa)). Positions 493 and 520 each coordinate Mg(2+).

It belongs to the TPP enzyme family. The cofactor is Mg(2+). Thiamine diphosphate serves as cofactor.

It catalyses the reaction 3D-3,5/4-trihydroxycyclohexane-1,2-dione + H2O = 5-deoxy-D-glucuronate + H(+). It functions in the pathway polyol metabolism; myo-inositol degradation into acetyl-CoA; acetyl-CoA from myo-inositol: step 3/7. Functionally, involved in the cleavage of the C1-C2 bond of 3D-(3,5/4)-trihydroxycyclohexane-1,2-dione (THcHDO) to yield 5-deoxy-glucuronate (5DG). This Bacillus cereus (strain ZK / E33L) protein is 3D-(3,5/4)-trihydroxycyclohexane-1,2-dione hydrolase 1.